Reading from the N-terminus, the 190-residue chain is Dynactin subunit 6 (190 aa).

The residue at position 186 (Thr186) is a Phosphothreonine; by CDK1.

The protein belongs to the dynactin subunits 5/6 family. Dynactin subunit 6 subfamily. Subunit of dynactin, a multiprotein complex part of a tripartite complex with dynein and a adapter, such as BICDL1, BICD2 or HOOK3. The dynactin complex is built around ACTR1A/ACTB filament and consists of an actin-related filament composed of a shoulder domain, a pointed end and a barbed end. Its length is defined by its flexible shoulder domain. The soulder is composed of 2 DCTN1 subunits, 4 DCTN2 and 2 DCTN3. The 4 DCNT2 (via N-terminus) bind the ACTR1A filament and act as molecular rulers to determine the length. The pointed end is important for binding dynein-dynactin cargo adapters. Consists of 4 subunits: ACTR10, DCNT4, DCTN5 and DCTN6. Within the complex DCTN6 forms a heterodimer with DCTN5. The barbed end is composed of a CAPZA1:CAPZB heterodimers, which binds ACTR1A/ACTB filament and dynactin and stabilizes dynactin. Interacts with PLK1. Interacts with N4BP2L1. In terms of processing, phosphorylation at Thr-186 by CDK1 during mitotic prometaphase creates a binding site for PLK1 that facilitates its recruitment to kinetochores.

The protein resides in the cytoplasm. The protein localises to the cytoskeleton. It is found in the chromosome. It localises to the centromere. Its subcellular location is the kinetochore. Part of the dynactin complex that activates the molecular motor dynein for ultra-processive transport along microtubules. This is Dynactin subunit 6 (DCTN6) from Pongo abelii (Sumatran orangutan).